The following is a 353-amino-acid chain: DNA polymerase IV (353 aa).

Residues 6–187 (IIHVDCDCFY…LPVSKLHGVG (182 aa)) form the UmuC domain. Residues Asp10 and Asp105 each coordinate Mg(2+). Glu106 is an active-site residue.

It belongs to the DNA polymerase type-Y family. As to quaternary structure, monomer. Mg(2+) is required as a cofactor.

It is found in the cytoplasm. It catalyses the reaction DNA(n) + a 2'-deoxyribonucleoside 5'-triphosphate = DNA(n+1) + diphosphate. In terms of biological role, poorly processive, error-prone DNA polymerase involved in untargeted mutagenesis. Copies undamaged DNA at stalled replication forks, which arise in vivo from mismatched or misaligned primer ends. These misaligned primers can be extended by PolIV. Exhibits no 3'-5' exonuclease (proofreading) activity. May be involved in translesional synthesis, in conjunction with the beta clamp from PolIII. This is DNA polymerase IV from Pseudomonas fluorescens (strain Pf0-1).